We begin with the raw amino-acid sequence, 341 residues long: 2-acylglycerol O-acyltransferase 3 (341 aa).

Transmembrane regions (helical) follow at residues 29–49 and 50–70; these read YVLT…VLLF and TSLW…WDTP. Asparagine 126 carries an N-linked (GlcNAc...) asparagine glycan. Residues 137–157 traverse the membrane as a helical segment; that stretch reads LFPGLRPWLAVLAGLFYLPVY.

The protein belongs to the diacylglycerol acyltransferase family. Post-translationally, ubiquitinated. Ubiquitination leads to proteasomal degradation. Selectively expressed in the digestive system. Highly expressed in the ileum, and at lower level in jejunum, duodenum, colon, cecum and the rectum. Not expressed in the stomach and the esophagus and trachea. Expressed at very low level in liver.

The protein localises to the endoplasmic reticulum membrane. The protein resides in the cytoplasm. Its subcellular location is the perinuclear region. It catalyses the reaction a 2-acylglycerol + an acyl-CoA = a 1,2-diacylglycerol + CoA. The enzyme catalyses an acyl-CoA + a 1,2-diacyl-sn-glycerol = a triacyl-sn-glycerol + CoA. It carries out the reaction 2-(9Z-octadecenoyl)-glycerol + (9Z)-octadecenoyl-CoA = 1,2-di-(9Z-octadecenoyl)-sn-glycerol + CoA. The catalysed reaction is 2-(9Z-octadecenoyl)-glycerol + hexadecanoyl-CoA = 1-hexadecanoyl-2-(9Z-octadecenoyl)-sn-glycerol + CoA. It catalyses the reaction 1,2-di-(9Z-octadecenoyl)-sn-glycerol + (9Z)-octadecenoyl-CoA = 1,2,3-tri-(9Z-octadecenoyl)-glycerol + CoA. The enzyme catalyses 1-hexadecanoyl-2-(9Z-octadecenoyl)-sn-glycerol + hexadecanoyl-CoA = 1,3-dihexadecanoyl-2-(9Z-octadecenoyl)glycerol + CoA. It carries out the reaction all-trans-retinol + hexadecanoyl-CoA = all-trans-retinyl hexadecanoate + CoA. The catalysed reaction is 1-O-(9Z-octadecenyl)-glycerol + (9Z)-octadecenoyl-CoA = 1-O-(9Z-octadecyl)-3-(9Z-octadecenoyl)-glycerol + CoA. It catalyses the reaction 1-O-(9Z-octadecyl)-3-(9Z-octadecenoyl)-glycerol + (9Z)-octadecenoyl-CoA = 1-O-(9Z-octadecenyl)-2,3-di-(9Z-octadecenoyl)glycerol + CoA. It participates in glycerolipid metabolism; triacylglycerol biosynthesis. Its function is as follows. Catalyzes the formation of diacylglycerol from 2-monoacylglycerol and fatty acyl-CoA. Also able to catalyze the terminal step in triacylglycerol synthesis by using diacylglycerol and fatty acyl-CoA as substrates. Has a preference toward palmitoyl-CoA and oleoyl-CoA. May be involved in absorption of dietary fat in the small intestine by catalyzing the resynthesis of triacylglycerol in enterocytes. Also able to use 1-monoalkylglycerol (1-MAkG) as an acyl acceptor for the synthesis of monoalkyl-monoacylglycerol (MAMAG). The sequence is that of 2-acylglycerol O-acyltransferase 3 from Homo sapiens (Human).